The primary structure comprises 316 residues: Ribosomal RNA small subunit methyltransferase H (316 aa).

Residues 35-37 (GGH), D55, F79, D101, and Q108 contribute to the S-adenosyl-L-methionine site.

The protein belongs to the methyltransferase superfamily. RsmH family.

It is found in the cytoplasm. It catalyses the reaction cytidine(1402) in 16S rRNA + S-adenosyl-L-methionine = N(4)-methylcytidine(1402) in 16S rRNA + S-adenosyl-L-homocysteine + H(+). In terms of biological role, specifically methylates the N4 position of cytidine in position 1402 (C1402) of 16S rRNA. The sequence is that of Ribosomal RNA small subunit methyltransferase H from Vibrio proteolyticus (Aeromonas proteolytica).